The primary structure comprises 882 residues: Translation initiation factor IF-2 (882 aa).

The tract at residues 28 to 296 (GIRKSADDSV…LQQGFQKPAQ (269 aa)) is disordered. Positions 67-81 (STLNIPGTGGKSKSV) are enriched in polar residues. Residues 92 to 209 (VKRDPQEAER…RMAEENKWTD (118 aa)) are compositionally biased toward basic and acidic residues. Over residues 244-258 (GRGRNAKAARPKKGN) the composition is skewed to basic residues. Residues 259–272 (KHAESKADREEARA) are compositionally biased toward basic and acidic residues. The tr-type G domain maps to 381–550 (PRAPVVTIMG…LLQAEVLELK (170 aa)). The tract at residues 390 to 397 (GHVDHGKT) is G1. GTP is bound at residue 390–397 (GHVDHGKT). The G2 stretch occupies residues 415 to 419 (GITQH). The segment at 436–439 (DTPG) is G3. Residues 436–440 (DTPGH) and 490–493 (NKID) contribute to the GTP site. The G4 stretch occupies residues 490 to 493 (NKID). The segment at 526–528 (SAK) is G5. Lys800 carries the post-translational modification N6-acetyllysine.

This sequence belongs to the TRAFAC class translation factor GTPase superfamily. Classic translation factor GTPase family. IF-2 subfamily.

Its subcellular location is the cytoplasm. Its function is as follows. One of the essential components for the initiation of protein synthesis. Protects formylmethionyl-tRNA from spontaneous hydrolysis and promotes its binding to the 30S ribosomal subunits. Also involved in the hydrolysis of GTP during the formation of the 70S ribosomal complex. The sequence is that of Translation initiation factor IF-2 from Shigella boydii serotype 4 (strain Sb227).